The primary structure comprises 944 residues: ATP-dependent RNA helicase DDX42 (944 aa).

The span at 1–18 shows a compositional bias: gly residues; the sequence is MNWNKGGPGTKRGFGFGG. 3 disordered regions span residues 1 to 119, 131 to 155, and 182 to 203; these read MNWN…LEAF, MKRL…EEED, and EYDS…LPPI. Low complexity predominate over residues 35-52; it reads SHSAFGTAGSSAAFAKSG. The span at 70 to 84 shows a compositional bias: acidic residues; it reads DEENAYFEDEEEDNS. A coiled-coil region spans residues 120–157; that stretch reads MAEVEDQAARDMKRLEDKDKEKKNAKGIRDDIEEEDDQ. Positions 131–149 are enriched in basic and acidic residues; it reads MKRLEDKDKEKKNAKGIRD. Residues 253 to 281 carry the Q motif motif; that stretch reads SSFARFGFDEQLMHQIRKSEYTQPTPIQC. The Helicase ATP-binding domain occupies 284–459; sequence VPVAMSGRDM…RDILIDPIRV (176 aa). 297–304 is a binding site for ATP; it reads AKTGSGKT. Positions 407 to 410 match the DEAD box motif; it reads DEAD. The Helicase C-terminal domain maps to 487 to 632; it reads WLTRRLVEFT…HVSKELLDLA (146 aa). Disordered regions lie at residues 642-682, 723-753, and 794-944; these read RFKG…VMSN, GSSA…AANP, and SANA…RWDS. Over residues 723–737 the composition is skewed to low complexity; the sequence is GSSAAGASGWTSAGS. The segment covering 738–752 has biased composition (polar residues); it reads LNSVPTSSAQQNAAN. A compositionally biased stretch (low complexity) spans 794–814; it reads SANASAGNREGVGSAGSAPRG. A compositionally biased stretch (gly residues) spans 815–824; the sequence is GSSGGGGGGI. Composition is skewed to basic and acidic residues over residues 825–887 and 901–926; these read VRER…RHFT and NISE…DNKT.

Belongs to the DEAD box helicase family. DDX42 subfamily. In terms of assembly, transient component of the SF3B subcomplex of the 17S U2 SnRNP complex.

It localises to the cytoplasm. Its subcellular location is the nucleus. It carries out the reaction ATP + H2O = ADP + phosphate + H(+). In terms of biological role, ATP-dependent RNA helicase that binds to partially double-stranded RNAs (dsRNAs) in order to unwind RNA secondary structures. Unwinding is promoted in the presence of single-strand binding proteins. Also mediates RNA duplex formation thereby displacing the single-strand RNA binding protein. ATP and ADP modulate its activity: ATP binding and hydrolysis by DDX42 triggers RNA strand separation, whereas the ADP-bound form of the protein triggers annealing of complementary RNA strands. Required for assembly of the 17S U2 SnRNP complex of the spliceosome, a large ribonucleoprotein complex that removes introns from transcribed pre-mRNAs: DDX42 associates transiently with the SF3B subcomplex of the 17S U2 SnRNP complex and is released after fulfilling its role in the assembly of 17S U2 SnRNP. This is ATP-dependent RNA helicase DDX42 (DDX42) from Gallus gallus (Chicken).